The chain runs to 475 residues: Eukaryotic translation initiation factor 2 subunit 3 (475 aa).

The 210-residue stretch at 38–247 (QATINIGTIG…IVNKIPVPPR (210 aa)) folds into the tr-type G domain. Residues 47–54 (GHVAHGKS) are G1. 50–55 (AHGKST) is a binding site for GTP. The tract at residues 75 to 79 (NITIK) is G2. Positions 133 to 136 (DCPG) are G3. Residues 189–192 (NKID) and 224–226 (SAQ) each bind GTP. The interval 189 to 192 (NKID) is G4. Positions 224 to 226 (SAQ) are G5. The interacts with CDC123 stretch occupies residues 456–468 (GQIFGGKTITPVL).

The protein belongs to the TRAFAC class translation factor GTPase superfamily. Classic translation factor GTPase family. EIF2G subfamily. Eukaryotic translation initiation factor 2 eIF2 is a heterotrimeric complex composed of an alpha, a beta and a gamma subunit. The factors eIF-1, eIF-2, eIF-3, TIF5/eIF-5 and methionyl-tRNAi form a multifactor complex (MFC) that may bind to the 40S ribosome.

Its subcellular location is the cytoplasm. It is found in the cytosol. It carries out the reaction GTP + H2O = GDP + phosphate + H(+). Its function is as follows. As a subunit of eukaryotic initiation factor 2 eIF2, involved in the early steps of protein synthesis. In the presence of GTP, eIF-2 forms a ternary complex with initiator tRNA Met-tRNAi and then recruits the 40S ribosomal complex and initiation factors eIF-1, eIF-1A and eIF-3 to form the 43S pre-initiation complex (43S PIC), a step that determines the rate of protein translation. The 43S PIC binds to mRNA and scans downstream to the initiation codon, where it forms a 48S initiation complex by codon-anticodon base pairing. This leads to the displacement of eIF-1 to allow GTPase-activating protein (GAP) eIF-5-mediated hydrolysis of eIF2-bound GTP. Hydrolysis of GTP and release of Pi, which makes GTP hydrolysis irreversible, causes the release of the eIF-2-GDP binary complex from the 40S subunit, an event that is essential for the subsequent joining of the 60S ribosomal subunit to form an elongation-competent 80S ribosome. In order for eIF-2 to recycle and catalyze another round of initiation, the GDP bound to eIF-2 must be exchanged with GTP by way of a reaction catalyzed by GDP-GTP exchange factor (GEF) eIF-2B. The protein is Eukaryotic translation initiation factor 2 subunit 3 of Drosophila melanogaster (Fruit fly).